A 240-amino-acid chain; its full sequence is Guanine nucleotide exchange factor sopE2 (240 aa).

The GEF catalytic domain stretch occupies residues 78–240; sequence LTSKTVKDFM…IANKYLQNAS (163 aa).

It belongs to the GEF (guanine exchange factor) SopE family.

The protein resides in the secreted. Functionally, activator for CDC42 by directly engaging this Rho GTPase and acting as potent guanine nucleotide exchange factor (GEF). This activation results in actin cytoskeleton rearrangements and stimulates membrane ruffling, promoting bacterial entry into non-phagocytic cells. Also activates NF-kB, p38 and ERK kinases, which are known to be involved in the induction of IL-8 expression. Chaperone InvB is required for secretion, translocation and stabilization of intracellular levels of sopE2. The chain is Guanine nucleotide exchange factor sopE2 (sopE2) from Salmonella typhimurium (strain LT2 / SGSC1412 / ATCC 700720).